The primary structure comprises 204 residues: uncharacterized protein (204 aa).

This is an uncharacterized protein from Saccharomyces cerevisiae (strain ATCC 204508 / S288c) (Baker's yeast).